The following is a 384-amino-acid chain: Putative aminohydrolase MTH_994 (384 aa).

Residues His60, His62, His207, and Asp291 each contribute to the Zn(2+) site.

Belongs to the metallo-dependent hydrolases superfamily. ATZ/TRZ family.

This Methanothermobacter thermautotrophicus (strain ATCC 29096 / DSM 1053 / JCM 10044 / NBRC 100330 / Delta H) (Methanobacterium thermoautotrophicum) protein is Putative aminohydrolase MTH_994.